Consider the following 287-residue polypeptide: Outer membrane protein TP0453 (287 aa).

The signal sequence occupies residues methionine 1 to serine 24. Residue cysteine 25 is the site of N-palmitoyl cysteine attachment. The S-diacylglycerol cysteine moiety is linked to residue cysteine 25. Amphipathic helix stretches follow at residues proline 36–valine 40, glutamate 56–isoleucine 63, lysine 69–aspartate 77, tyrosine 103–arginine 112, methionine 155–leucine 162, proline 172–threonine 179, glycine 194–leucine 202, phenylalanine 240–leucine 250, and alanine 270–serine 279.

As to quaternary structure, a mix of monomer and dimers; may integrate into the membrane as a dimer. In terms of processing, palmitoylated upon expression of a fusion protein with first 46 residues fused to PhoA in E.coli.

It is found in the cell outer membrane. Functionally, might be involved in ligand transport, alters membrane permeability at acidic pH (4.0 to 5.5). Incubation of the non-lipidated form with lipid vesicles increases their permeability. This Treponema pallidum (strain Nichols) protein is Outer membrane protein TP0453.